Reading from the N-terminus, the 100-residue chain is Large ribosomal subunit protein bL21 (100 aa).

Belongs to the bacterial ribosomal protein bL21 family. In terms of assembly, part of the 50S ribosomal subunit. Contacts protein L20.

Its function is as follows. This protein binds to 23S rRNA in the presence of protein L20. This chain is Large ribosomal subunit protein bL21, found in Mycoplasma mycoides subsp. mycoides SC (strain CCUG 32753 / NCTC 10114 / PG1).